The primary structure comprises 216 residues: Probable transaldolase (216 aa).

Residue lysine 83 is the Schiff-base intermediate with substrate of the active site.

It belongs to the transaldolase family. Type 3B subfamily.

Its subcellular location is the cytoplasm. The enzyme catalyses D-sedoheptulose 7-phosphate + D-glyceraldehyde 3-phosphate = D-erythrose 4-phosphate + beta-D-fructose 6-phosphate. Its pathway is carbohydrate degradation; pentose phosphate pathway; D-glyceraldehyde 3-phosphate and beta-D-fructose 6-phosphate from D-ribose 5-phosphate and D-xylulose 5-phosphate (non-oxidative stage): step 2/3. In terms of biological role, transaldolase is important for the balance of metabolites in the pentose-phosphate pathway. In Methanococcus aeolicus (strain ATCC BAA-1280 / DSM 17508 / OCM 812 / Nankai-3), this protein is Probable transaldolase.